Consider the following 780-residue polypeptide: Striatin (780 aa).

Residues 53–120 (LHFLQHEWAR…QERAKYHKLK (68 aa)) are a coiled coil. Residues 55–63 (FLQHEWARF) are caveolin-binding. A disordered region spans residues 124–150 (ELNQGDMKPPSYDSDEGNETEVQPQQN). Residue Ser-137 is modified to Phosphoserine. Residues 149–166 (QNSQLMWKQGRQLLRQYL) form a calmodulin-binding region. Phosphothreonine is present on Thr-225. 4 positions are modified to phosphoserine: Ser-227, Ser-229, Ser-245, and Ser-259. Disordered stretches follow at residues 289 to 310 (DFLVTSEEGDNESRSAGDGTDW) and 365 to 387 (DELPSLQPSVGSPSRPSSSRLPE). The span at 299 to 310 (NESRSAGDGTDW) shows a compositional bias: basic and acidic residues. WD repeat units follow at residues 461 to 500 (SHFDGIRALAFHPIEPVLITASEDHTLKMWNLQKTAPAKK), 514 to 553 (AHKGPVLCVVMSSNGEQCYSGGTDGLIQGWNTTNPNIDPY), 567 to 606 (GHTDAVWGLAYSAAHQRLLSCSADGTLRLWNTTEVAPALS), 662 to 701 (NSSCQINRVISHPTLPISITAHEDRHIKFYDNNTGKLIHS), 704 to 743 (AHLEAVTSLAVDPNGLYLMSGSHDCSIRLWNLESKTCIQE), and 750 to 780 (KFEESIHDVAFHPSKCYIASAGADALAKVFV).

The protein belongs to the WD repeat striatin family. Part of the core of STRIPAK complexes composed of PP2A catalytic and scaffolding subunits, the striatins (PP2A regulatory subunits), the striatin-associated proteins MOB4, STRIP1 and STRIP2, PDCD10 and members of the STE20 kinases, such as STK24 and STK26. Interacts with CTTNBP2; this interaction may regulate dendritic spine distribution of STRN. Activation of glutamate receptors weakens the interaction with CTTNBP2. As to expression, preferentially expressed in brain.

The protein resides in the cytoplasm. It is found in the membrane. It localises to the cell projection. The protein localises to the dendritic spine. Its function is as follows. Calmodulin-binding scaffolding protein which is the center of the striatin-interacting phosphatase and kinase (STRIPAK) complexes. STRIPAK complexes have critical roles in protein (de)phosphorylation and are regulators of multiple signaling pathways including Hippo, MAPK, nuclear receptor and cytoskeleton remodeling. Different types of STRIPAK complexes are involved in a variety of biological processes such as cell growth, differentiation, apoptosis, metabolism and immune regulation. This chain is Striatin (STRN), found in Homo sapiens (Human).